The sequence spans 386 residues: Manganese dependent endoglucanase Eg5A (386 aa).

Positions 1–17 (MLKYASIALALATLGVA) are cleaved as a signal peptide. Positions 18–53 (QQQQWGQCGGIGWTGATTCVAGSVCSVLNPYYSQCI) constitute a CBM1 domain. Glutamate 209 serves as the catalytic Proton donor. Glutamate 319 serves as the catalytic Nucleophile. Asparagine 324 carries N-linked (GlcNAc...) asparagine glycosylation.

The protein belongs to the glycosyl hydrolase 5 (cellulase A) family. Mn(2+) is required as a cofactor.

Its subcellular location is the secreted. The catalysed reaction is Endohydrolysis of (1-&gt;4)-beta-D-glucosidic linkages in cellulose, lichenin and cereal beta-D-glucans.. Its function is as follows. Secreted manganese dependent endoglucanase that acts by cleaving the beta-1,4-glucose linkage. Exhibits high activity toward carboxymethyl-cellulose (CMC), barley glucan, and glucomannan. Displays low activity on larminarin and xyloglucan but does not hydrolyze hemicellulose substrates such as birchwood xylan, arabinoxylan, and arabinan. The protein is Manganese dependent endoglucanase Eg5A of Phanerodontia chrysosporium (White-rot fungus).